The following is a 527-amino-acid chain: Probable guanine deaminase (527 aa).

The Zn(2+) site is built by H79 and H81. Residues 81–84 (HAPQ), 212–213 (RF), 239–242 (HISE), and D329 contribute to the substrate site. Positions 239 and 329 each coordinate Zn(2+).

Belongs to the metallo-dependent hydrolases superfamily. ATZ/TRZ family. Zn(2+) is required as a cofactor.

The catalysed reaction is guanine + H2O + H(+) = xanthine + NH4(+). The protein operates within purine metabolism; guanine degradation; xanthine from guanine: step 1/1. In terms of biological role, catalyzes the hydrolytic deamination of guanine, producing xanthine and ammonia. The chain is Probable guanine deaminase from Schizosaccharomyces pombe (strain 972 / ATCC 24843) (Fission yeast).